A 94-amino-acid chain; its full sequence is Co-chaperonin GroES (94 aa).

Belongs to the GroES chaperonin family. As to quaternary structure, heptamer of 7 subunits arranged in a ring. Interacts with the chaperonin GroEL.

It localises to the cytoplasm. Its function is as follows. Together with the chaperonin GroEL, plays an essential role in assisting protein folding. The GroEL-GroES system forms a nano-cage that allows encapsulation of the non-native substrate proteins and provides a physical environment optimized to promote and accelerate protein folding. GroES binds to the apical surface of the GroEL ring, thereby capping the opening of the GroEL channel. This chain is Co-chaperonin GroES, found in Anoxybacillus flavithermus (strain DSM 21510 / WK1).